An 89-amino-acid polypeptide reads, in one-letter code: Small ribosomal subunit protein uS15 (89 aa).

The protein belongs to the universal ribosomal protein uS15 family. As to quaternary structure, part of the 30S ribosomal subunit. Forms a bridge to the 50S subunit in the 70S ribosome, contacting the 23S rRNA.

Its function is as follows. One of the primary rRNA binding proteins, it binds directly to 16S rRNA where it helps nucleate assembly of the platform of the 30S subunit by binding and bridging several RNA helices of the 16S rRNA. Forms an intersubunit bridge (bridge B4) with the 23S rRNA of the 50S subunit in the ribosome. This chain is Small ribosomal subunit protein uS15, found in Thermobifida fusca (strain YX).